The sequence spans 263 residues: Tryptophan synthase alpha chain (263 aa).

Active-site proton acceptor residues include Glu49 and Asp60.

This sequence belongs to the TrpA family. Tetramer of two alpha and two beta chains.

It carries out the reaction (1S,2R)-1-C-(indol-3-yl)glycerol 3-phosphate + L-serine = D-glyceraldehyde 3-phosphate + L-tryptophan + H2O. It functions in the pathway amino-acid biosynthesis; L-tryptophan biosynthesis; L-tryptophan from chorismate: step 5/5. The alpha subunit is responsible for the aldol cleavage of indoleglycerol phosphate to indole and glyceraldehyde 3-phosphate. This is Tryptophan synthase alpha chain from Cereibacter sphaeroides (strain ATCC 17025 / ATH 2.4.3) (Rhodobacter sphaeroides).